A 585-amino-acid chain; its full sequence is Mitochondrial translation ATP-dependent RNA helicase mrh5 (585 aa).

The Q motif motif lies at proline 87–glutamine 117. Residues asparagine 121 to isoleucine 351 form the Helicase ATP-binding domain. Glycine 134–serine 141 is a binding site for ATP. Positions aspartate 261–aspartate 264 match the DEAD box motif. In terms of domain architecture, Helicase C-terminal spans asparagine 390–histidine 584.

Belongs to the DEAD box helicase family. In terms of assembly, component of the MRH5C complex, composed of mrh5, ppr4, mtf2, and sls1. Proteins mtf2 and sls1 form a subcomplex that serves as a scaffold to bring mrh5 and ppr4 together. The MRH5C complex associates with the small subunit of the mitochondrial ribosome.

The protein localises to the mitochondrion. The enzyme catalyses ATP + H2O = ADP + phosphate + H(+). Its function is as follows. Translation activation factor that as part of the MRH5C complex specifically recruits cox1 mRNA to the mitochondrial ribosome for translation initiation. The sequence is that of Mitochondrial translation ATP-dependent RNA helicase mrh5 from Schizosaccharomyces pombe (strain 972 / ATCC 24843) (Fission yeast).